A 366-amino-acid chain; its full sequence is Type 2 DNA topoisomerase 6 subunit A (366 aa).

In terms of domain architecture, Topo IIA-type catalytic spans 7–146 (SDETEARDQL…FHMRPEESGA (140 aa)). The O-(5'-phospho-DNA)-tyrosine intermediate role is filled by Tyr-101. 2 residues coordinate Mg(2+): Glu-199 and Asp-251.

This sequence belongs to the TOP6A family. In terms of assembly, homodimer. Heterotetramer of two Top6A and two Top6B chains. It depends on Mg(2+) as a cofactor.

The catalysed reaction is ATP-dependent breakage, passage and rejoining of double-stranded DNA.. Its function is as follows. Relaxes both positive and negative superturns and exhibits a strong decatenase activity. This chain is Type 2 DNA topoisomerase 6 subunit A, found in Halobacterium salinarum (strain ATCC 700922 / JCM 11081 / NRC-1) (Halobacterium halobium).